The sequence spans 77 residues: Putative defensin-like protein 185 (77 aa).

An N-terminal signal peptide occupies residues 1 to 22 (MKNSSILLLLVVFFVISSSGEA). 4 cysteine pairs are disulfide-bonded: C25–C77, C31–C54, C40–C71, and C44–C73.

The protein belongs to the DEFL family.

Its subcellular location is the secreted. The protein is Putative defensin-like protein 185 (LCR39) of Arabidopsis thaliana (Mouse-ear cress).